Reading from the N-terminus, the 256-residue chain is L-erythrulose-1-phosphate isomerase (256 aa).

Histidine 96 serves as the catalytic Electrophile. Glutamate 169 functions as the Proton acceptor in the catalytic mechanism. Substrate-binding residues include glycine 175 and serine 212.

Belongs to the triosephosphate isomerase family. In terms of assembly, homodimer.

The protein resides in the cytoplasm. The enzyme catalyses L-erythrulose 1-phosphate = D-erythrulose 4-phosphate. The protein operates within carbohydrate metabolism; erythritol degradation. Functionally, catalyzes the isomerization of D-erythrulose-4P to L-erythrulose-1P. The sequence is that of L-erythrulose-1-phosphate isomerase from Brucella melitensis biotype 1 (strain ATCC 23456 / CCUG 17765 / NCTC 10094 / 16M).